The sequence spans 360 residues: Photosystem II protein D1 (360 aa).

3 helical membrane-spanning segments follow: residues 29–46, 118–133, and 142–156; these read YVGW…TATT, HFLL…QWEL, and WICV…AATA. Residue H118 participates in chlorophyll a binding. Pheophytin a is bound at residue Y126. The [CaMn4O5] cluster site is built by D170 and E189. Residues 197–218 form a helical membrane-spanning segment; the sequence is FHMLGVAGVFGGSLFSAMHGSL. Residue H198 participates in chlorophyll a binding. Residues H215 and 264–265 contribute to the a quinone site; that span reads SF. H215 is a binding site for Fe cation. H272 contributes to the Fe cation binding site. The helical transmembrane segment at 274–288 threads the bilayer; the sequence is FLGAWPVIGIWFTAM. [CaMn4O5] cluster is bound by residues H332, E333, D342, and A344. Positions 345–360 are excised as a propeptide; sequence SGEQAPVALTAPAING.

Belongs to the reaction center PufL/M/PsbA/D family. In terms of assembly, PSII is composed of 1 copy each of membrane proteins PsbA, PsbB, PsbC, PsbD, PsbE, PsbF, PsbH, PsbI, PsbJ, PsbK, PsbL, PsbM, PsbT, PsbX, PsbY, PsbZ, Psb30/Ycf12, peripheral proteins PsbO, CyanoQ (PsbQ), PsbU, PsbV and a large number of cofactors. It forms dimeric complexes. Requires The D1/D2 heterodimer binds P680, chlorophylls that are the primary electron donor of PSII, and subsequent electron acceptors. It shares a non-heme iron and each subunit binds pheophytin, quinone, additional chlorophylls, carotenoids and lipids. D1 provides most of the ligands for the Mn4-Ca-O5 cluster of the oxygen-evolving complex (OEC). There is also a Cl(-1) ion associated with D1 and D2, which is required for oxygen evolution. The PSII complex binds additional chlorophylls, carotenoids and specific lipids. as cofactor. Post-translationally, tyr-161 forms a radical intermediate that is referred to as redox-active TyrZ, YZ or Y-Z. In terms of processing, C-terminally processed by CtpA; processing is essential to allow assembly of the oxygen-evolving complex and thus photosynthetic growth.

It localises to the cellular thylakoid membrane. It catalyses the reaction 2 a plastoquinone + 4 hnu + 2 H2O = 2 a plastoquinol + O2. Its function is as follows. Photosystem II (PSII) is a light-driven water:plastoquinone oxidoreductase that uses light energy to abstract electrons from H(2)O, generating O(2) and a proton gradient subsequently used for ATP formation. It consists of a core antenna complex that captures photons, and an electron transfer chain that converts photonic excitation into a charge separation. The D1/D2 (PsbA/PsbD) reaction center heterodimer binds P680, the primary electron donor of PSII as well as several subsequent electron acceptors. In Microcystis aeruginosa, this protein is Photosystem II protein D1.